A 282-amino-acid polypeptide reads, in one-letter code: Elongation factor Ts (282 aa).

An involved in Mg(2+) ion dislocation from EF-Tu region spans residues 80-83 (TDFV).

This sequence belongs to the EF-Ts family.

It is found in the cytoplasm. Functionally, associates with the EF-Tu.GDP complex and induces the exchange of GDP to GTP. It remains bound to the aminoacyl-tRNA.EF-Tu.GTP complex up to the GTP hydrolysis stage on the ribosome. The sequence is that of Elongation factor Ts (tsf) from Chlamydia muridarum (strain MoPn / Nigg).